Consider the following 176-residue polypeptide: Macro domain-containing protein mll7730 (176 aa).

The 174-residue stretch at 1 to 174 folds into the Macro domain; that stretch reads MSKALDRIRI…LYLRAVAALR (174 aa).

It belongs to the MacroD-type family.

The polypeptide is Macro domain-containing protein mll7730 (Mesorhizobium japonicum (strain LMG 29417 / CECT 9101 / MAFF 303099) (Mesorhizobium loti (strain MAFF 303099))).